We begin with the raw amino-acid sequence, 477 residues long: MEWEPVIGLEVHVQLRTQSKIFSGAATAYGAEPNTQACAIDLGLPGVLPVLNKEAVKLAVCFGLSVNASIPPYSIFARKNYFYPDLPKGYQISQYNFPIVQNGHLDIENEDGTTKRIGITRAHLEEDAGKSFHEGMQGYSGIDFNRAGTPLLEIVSEPDIRSAQEAVAYLKALHSLVRYIGVSDANMQEGAFRCDVNISLRPKGEEKFGTRAEIKNVNSFRFVERAILFEINRQKEILENGGTIVQETRLYDAVQDETRSMRTKEEAHDYRYFPDPDLLPVEIGPEFIEAVKNQLPELPWEKRKRFAASYQLSNYDVKLLTTQIEIANYFETVLKIDKTIPPKLAANWINGDLAAALNKNNLSITQSPINAEQLAGLLHRIADNTLSGSMGKQVFETMWGGEGDADTIIERHGLKQITDTEALEKIIDEVIENNPTQVEQYRSGKDKLIAFFVGQVMKATKGKANPQQVNELFKKKL.

This sequence belongs to the GatB/GatE family. GatB subfamily. Heterotrimer of A, B and C subunits.

It catalyses the reaction L-glutamyl-tRNA(Gln) + L-glutamine + ATP + H2O = L-glutaminyl-tRNA(Gln) + L-glutamate + ADP + phosphate + H(+). The catalysed reaction is L-aspartyl-tRNA(Asn) + L-glutamine + ATP + H2O = L-asparaginyl-tRNA(Asn) + L-glutamate + ADP + phosphate + 2 H(+). In terms of biological role, allows the formation of correctly charged Asn-tRNA(Asn) or Gln-tRNA(Gln) through the transamidation of misacylated Asp-tRNA(Asn) or Glu-tRNA(Gln) in organisms which lack either or both of asparaginyl-tRNA or glutaminyl-tRNA synthetases. The reaction takes place in the presence of glutamine and ATP through an activated phospho-Asp-tRNA(Asn) or phospho-Glu-tRNA(Gln). This is Aspartyl/glutamyl-tRNA(Asn/Gln) amidotransferase subunit B from Coxiella burnetii (strain CbuK_Q154) (Coxiella burnetii (strain Q154)).